The following is a 95-amino-acid chain: Secreted RxLR effector protein 20 (95 aa).

An N-terminal signal peptide occupies residues 1-20 (MQSPYIILFALVTLLGSISG). The RxLR signature appears at 47–50 (RLLR).

It belongs to the RxLR effector family.

Its subcellular location is the secreted. The protein resides in the host nucleus. The protein localises to the host cytoplasm. Its function is as follows. Secreted effector that partially suppresses the host cell death induced by cell death-inducing proteins. The protein is Secreted RxLR effector protein 20 of Plasmopara viticola (Downy mildew of grapevine).